We begin with the raw amino-acid sequence, 85 residues long: MHQENLLALIALSALCLINVLIWLFNLRIYLVQRKQDRREQEILERLRRIKEIRDDSDYESNEEEQQEVMELIHSHGFANPMFEL.

Residues 1 to 7 (MHQENLL) lie on the Extracellular side of the membrane. The chain crosses the membrane as a helical span at residues 8 to 28 (ALIALSALCLINVLIWLFNLR). Residues 29-85 (IYLVQRKQDRREQEILERLRRIKEIRDDSDYESNEEEQQEVMELIHSHGFANPMFEL) are Cytoplasmic-facing.

The protein belongs to the HIV-1 VPU protein family. As to quaternary structure, homopentamer. Interacts with host CD4 and BRTC; these interactions induce proteasomal degradation of CD4. Interacts with host BST2; this interaction leads to the degradation of host BST2. Interacts with host FBXW11. Interacts with host AP1M1; this interaction plays a role in the mistrafficking and subsequent degradation of host BST2. Interacts with host RANBP2; this interaction allows Vpu to down-regulate host BLM sumoylation. Post-translationally, phosphorylated by host CK2. This phosphorylation is necessary for interaction with human BTRC and degradation of CD4.

Its subcellular location is the host membrane. Ion channel activity is inhibited by hexamethylene amiloride in vitro. Its function is as follows. Enhances virion budding by targeting host CD4 and Tetherin/BST2 to proteasome degradation. Degradation of CD4 prevents any unwanted premature interactions between viral Env and its host receptor CD4 in the endoplasmic reticulum. Degradation of antiretroviral protein Tetherin/BST2 is important for virion budding, as BST2 tethers new viral particles to the host cell membrane. Mechanistically, Vpu bridges either CD4 or BST2 to BTRC, a substrate recognition subunit of the Skp1/Cullin/F-box protein E3 ubiquitin ligase, induces their ubiquitination and subsequent proteasomal degradation. The alteration of the E3 ligase specificity by Vpu seems to promote the degradation of host IKBKB, leading to NF-kappa-B down-regulation and subsequent apoptosis. Acts as a viroporin that forms an oligomeric ion channel in membranes. Modulates the host DNA repair mechanisms to promote degradation of nuclear viral cDNA in cells that are already productively infected in order to suppress immune sensing and proviral hyper-integration (superinfection). Manipulates PML-NBs and modulates SUMOylation of host BLM protein thereby enhancing its DNA-end processing activity toward viral unintegrated linear DNA. Also inhibits RAD52-mediated homologous repair of viral cDNA, preventing the generation of dead-end circular forms of single copies of the long terminal repeat and permitting sustained nucleolytic attack. In Human immunodeficiency virus type 1 group O (isolate MVP5180) (HIV-1), this protein is Protein Vpu.